The sequence spans 133 residues: Small ribosomal subunit protein uS8 (133 aa).

Belongs to the universal ribosomal protein uS8 family. Part of the 30S ribosomal subunit. Contacts proteins S5 and S12.

Its function is as follows. One of the primary rRNA binding proteins, it binds directly to 16S rRNA central domain where it helps coordinate assembly of the platform of the 30S subunit. The sequence is that of Small ribosomal subunit protein uS8 from Mycoplasma mobile (strain ATCC 43663 / 163K / NCTC 11711) (Mesomycoplasma mobile).